We begin with the raw amino-acid sequence, 156 residues long: Transcription antitermination protein NusB (156 aa).

The protein belongs to the NusB family.

Involved in transcription antitermination. Required for transcription of ribosomal RNA (rRNA) genes. Binds specifically to the boxA antiterminator sequence of the ribosomal RNA (rrn) operons. This is Transcription antitermination protein NusB from Rickettsia conorii (strain ATCC VR-613 / Malish 7).